Here is a 212-residue protein sequence, read N- to C-terminus: Ribosomal RNA small subunit methyltransferase G (212 aa).

S-adenosyl-L-methionine is bound by residues Gly-75, Leu-80, 126–127 (AQ), and Arg-141.

The protein belongs to the methyltransferase superfamily. RNA methyltransferase RsmG family.

It localises to the cytoplasm. Its function is as follows. Specifically methylates the N7 position of guanine in position 518 of 16S rRNA. This Beutenbergia cavernae (strain ATCC BAA-8 / DSM 12333 / CCUG 43141 / JCM 11478 / NBRC 16432 / NCIMB 13614 / HKI 0122) protein is Ribosomal RNA small subunit methyltransferase G.